The chain runs to 180 residues: UPF0340 protein LACR_0494 (180 aa).

Belongs to the UPF0340 family.

This Lactococcus lactis subsp. cremoris (strain SK11) protein is UPF0340 protein LACR_0494.